The following is an 807-amino-acid chain: Ecotropic viral integration site 5 ortholog (807 aa).

Residues methionine 1–leucine 31 are disordered. A Phosphothreonine modification is found at threonine 33. Serine 58 and serine 64 each carry phosphoserine. Positions glycine 116–glycine 300 constitute a Rab-GAP TBC domain. Coiled coils occupy residues serine 352–valine 463, cysteine 494–arginine 583, and arginine 627–phenylalanine 772.

Interacts with Rab11.

It localises to the cytoplasm. Its subcellular location is the endosome. Its function is as follows. Functions as a GTPase-activating protein (GAP). During border cell migration in the ovary, acts as a GAP for Rab11 and is necessary for the maintenance of active receptor tyrosine kinases at the leading edge. This Drosophila melanogaster (Fruit fly) protein is Ecotropic viral integration site 5 ortholog (Evi5).